Reading from the N-terminus, the 792-residue chain is Ubiquitin carboxyl-terminal hydrolase 10 (792 aa).

The segment at 2-27 (TTQESIKPLVDRILSNPLQFNAAMIS) is DHR2-binding module. 2 disordered regions span residues 64–87 (AESKQIKENNLIDRPNGKKTNTVP) and 103–320 (KDAA…SITP). The segment covering 107-129 (DATGAKKSAELSTELSTEPPSSS) has biased composition (low complexity). The segment at 109–145 (TGAKKSAELSTELSTEPPSSSSEDDKVGKEEEEEGEI) is SIR4-binding module. A compositionally biased stretch (basic and acidic residues) spans 144–171 (EIFHEARDYVEPRKASLKERDNADKGDG). Residues 167–208 (DKGDGEDIGEDIGEDIGEDIGEDIGEDIGENLGSPLATIDDS) form a UTP22-binding module region. Positions 172–195 (EDIGEDIGEDIGEDIGEDIGEDIG) are enriched in acidic residues. Basic and acidic residues predominate over residues 211-220 (ENEKEKRKEL). Positions 226-241 (SDDEIEDDEDEDDMDY) are enriched in acidic residues. Positions 288-297 (VNNTKENGNR) are enriched in polar residues. The USP domain occupies 362–733 (RGLLNHGVTC…NAYYLLYTRL (372 aa)). Residue cysteine 371 is the Nucleophile of the active site. Residues 526-563 (LDPNSDLSSDSINGTSATTSTTTSNAATKPSLSSSSSV) are disordered. The span at 530 to 539 (SDLSSDSING) shows a compositional bias: polar residues. The span at 540–563 (TSATTSTTTSNAATKPSLSSSSSV) shows a compositional bias: low complexity. The active-site Proton acceptor is the histidine 691. Positions 749–766 (TGNVTSKSKQEQAVNEPN) are enriched in polar residues. Residues 749–792 (TGNVTSKSKQEQAVNEPNNRPLKINSKKNNRKKWKKNKKRKFTK) form a disordered region. The span at 773 to 792 (NSKKNNRKKWKKNKKRKFTK) shows a compositional bias: basic residues.

This sequence belongs to the peptidase C19 family. As to quaternary structure, interacts with SIR4. Interacts with the proliferating-cell nuclear antigen PCNA/POL30. Interacts with DHR2 and UTP22.

Its subcellular location is the nucleus. The protein localises to the chromosome. It localises to the telomere. It is found in the nucleolus. It catalyses the reaction Thiol-dependent hydrolysis of ester, thioester, amide, peptide and isopeptide bonds formed by the C-terminal Gly of ubiquitin (a 76-residue protein attached to proteins as an intracellular targeting signal).. In terms of biological role, deubiquitinating enzyme involved in telomere and HM loci silencing, which is the repression of chromatin structure which leads to a stop in the transcription of nearby genes. Targets histone H2B for deubiquitination, thus helping to localize SIR2 to the telomere. At silent chromatin, including telomeres and the rDNA locus, not only maintains low H2B 'Lys-123' ubiquitination (H2BK123Ub), but also low H3 'Lys-4' and 'Lys-79' methylation (H3K4me and H3K79me, respectively). Controls the proliferating-cell nuclear antigen PCNA/POL30 deubiquitination which is crucial for keeping TLS polymerases in check as well as for down-regulating the error-free bypass. Deubiquitinates and stabilizes RPA190, the largest subunit of RNA polymerase I, to achieve optimal levels of ribosomes and cell growth. Also protects nutrient transporters such as GAP1 from ubiquitin-dependent endocytosis. This Saccharomyces cerevisiae (strain ATCC 204508 / S288c) (Baker's yeast) protein is Ubiquitin carboxyl-terminal hydrolase 10 (UBP10).